A 135-amino-acid polypeptide reads, in one-letter code: D-ribose pyranase (135 aa).

His-20 (proton donor) is an active-site residue. Residues Asp-28, His-102, and 124 to 126 (YAN) each bind substrate.

It belongs to the RbsD / FucU family. RbsD subfamily. As to quaternary structure, homodecamer.

Its subcellular location is the cytoplasm. The enzyme catalyses beta-D-ribopyranose = beta-D-ribofuranose. It participates in carbohydrate metabolism; D-ribose degradation; D-ribose 5-phosphate from beta-D-ribopyranose: step 1/2. Functionally, catalyzes the interconversion of beta-pyran and beta-furan forms of D-ribose. This chain is D-ribose pyranase, found in Rhodopirellula baltica (strain DSM 10527 / NCIMB 13988 / SH1).